The primary structure comprises 157 residues: Endoribonuclease YbeY (157 aa).

Positions 116, 120, and 126 each coordinate Zn(2+).

The protein belongs to the endoribonuclease YbeY family. The cofactor is Zn(2+).

The protein resides in the cytoplasm. In terms of biological role, single strand-specific metallo-endoribonuclease involved in late-stage 70S ribosome quality control and in maturation of the 3' terminus of the 16S rRNA. This chain is Endoribonuclease YbeY, found in Pseudarthrobacter chlorophenolicus (strain ATCC 700700 / DSM 12829 / CIP 107037 / JCM 12360 / KCTC 9906 / NCIMB 13794 / A6) (Arthrobacter chlorophenolicus).